Here is a 119-residue protein sequence, read N- to C-terminus: Basic phospholipase A2 (119 aa).

7 disulfides stabilise this stretch: Cys-11–Cys-72, Cys-27–Cys-118, Cys-29–Cys-45, Cys-44–Cys-100, Cys-51–Cys-93, Cys-61–Cys-86, and Cys-79–Cys-91. 3 residues coordinate Ca(2+): Tyr-28, Gly-30, and Gly-32. His-48 is an active-site residue. Asp-49 serves as a coordination point for Ca(2+). Residue Asn-82 is glycosylated (N-linked (GlcNAc...) asparagine). Asp-94 is an active-site residue.

This sequence belongs to the phospholipase A2 family. Group I subfamily. D49 sub-subfamily. Requires Ca(2+) as cofactor. As to expression, expressed by the venom gland.

Its subcellular location is the secreted. It catalyses the reaction a 1,2-diacyl-sn-glycero-3-phosphocholine + H2O = a 1-acyl-sn-glycero-3-phosphocholine + a fatty acid + H(+). Snake venom phospholipase A2 (PLA2) that shows weak myotoxicity and induces edema in mice. Shows no cytotoxicity in vitro. Has an anticoagulant effect in vitro. PLA2 catalyzes the calcium-dependent hydrolysis of the 2-acyl groups in 3-sn-phosphoglycerides. This chain is Basic phospholipase A2, found in Micrurus mipartitus (Red-tailed coral snake).